The primary structure comprises 255 residues: Glutamate racemase (255 aa).

Residues 7 to 8 and 39 to 40 contribute to the substrate site; these read DS and YG. Cysteine 70 functions as the Proton donor/acceptor in the catalytic mechanism. 71–72 is a substrate binding site; that stretch reads NT. Cysteine 181 acts as the Proton donor/acceptor in catalysis. Substrate is bound at residue 182–183; sequence TH.

Belongs to the aspartate/glutamate racemases family.

The catalysed reaction is L-glutamate = D-glutamate. Its pathway is cell wall biogenesis; peptidoglycan biosynthesis. Its function is as follows. Provides the (R)-glutamate required for cell wall biosynthesis. In Helicobacter pylori (strain Shi470), this protein is Glutamate racemase.